The primary structure comprises 226 residues: MTTTELVALLHLASPALPIGAYSYSQGLEAALDANLIRDADSARDWIASGLTDVLAHGELPFLAHQLARWQTHDTHALAAENAWFVASRESAELRRETEQMGWSLAQLCASLEWGDAARRATLASLSPIALPTAFAYAAAAHDAGADATLAAYAFGWVENQTSAALKAVPLGQLAGQRIIVALRGAIDAAVRRALATPPDAVNTFAPQLGILSARHETQYSRLFRS.

The protein belongs to the UreF family. UreD, UreF and UreG form a complex that acts as a GTP-hydrolysis-dependent molecular chaperone, activating the urease apoprotein by helping to assemble the nickel containing metallocenter of UreC. The UreE protein probably delivers the nickel.

The protein resides in the cytoplasm. Its function is as follows. Required for maturation of urease via the functional incorporation of the urease nickel metallocenter. This chain is Urease accessory protein UreF, found in Burkholderia cenocepacia (strain HI2424).